The following is a 565-amino-acid chain: NAD-dependent malic enzyme (565 aa).

Tyr104 functions as the Proton donor in the catalytic mechanism. Arg157 provides a ligand contact to NAD(+). The Proton acceptor role is filled by Lys175. Residues Glu246, Asp247, and Asp270 each contribute to the a divalent metal cation site. Residues Asp270 and Asn418 each coordinate NAD(+).

This sequence belongs to the malic enzymes family. As to quaternary structure, homotetramer. Mg(2+) serves as cofactor. Requires Mn(2+) as cofactor.

It catalyses the reaction (S)-malate + NAD(+) = pyruvate + CO2 + NADH. It carries out the reaction oxaloacetate + H(+) = pyruvate + CO2. This is NAD-dependent malic enzyme from Salmonella choleraesuis (strain SC-B67).